Consider the following 335-residue polypeptide: Spliceosome-associated protein 49 (335 aa).

2 consecutive RRM domains span residues 13-84 (IYLG…PIRV) and 101-172 (LFVG…PITV). Positions 204–223 (VTPQSTLPPGFSPATPAPTS) are disordered.

Belongs to the SF3B4 family.

The protein localises to the nucleus. In Schizosaccharomyces pombe (strain 972 / ATCC 24843) (Fission yeast), this protein is Spliceosome-associated protein 49 (sap49).